The primary structure comprises 503 residues: ATP synthase subunit alpha (503 aa).

169-176 (GDRSTGKT) provides a ligand contact to ATP.

This sequence belongs to the ATPase alpha/beta chains family. F-type ATPases have 2 components, CF(1) - the catalytic core - and CF(0) - the membrane proton channel. CF(1) has five subunits: alpha(3), beta(3), gamma(1), delta(1), epsilon(1). CF(0) has three main subunits: a(1), b(2) and c(9-12). The alpha and beta chains form an alternating ring which encloses part of the gamma chain. CF(1) is attached to CF(0) by a central stalk formed by the gamma and epsilon chains, while a peripheral stalk is formed by the delta and b chains.

The protein resides in the cell membrane. It carries out the reaction ATP + H2O + 4 H(+)(in) = ADP + phosphate + 5 H(+)(out). Functionally, produces ATP from ADP in the presence of a proton gradient across the membrane. The alpha chain is a regulatory subunit. This chain is ATP synthase subunit alpha, found in Dehalococcoides mccartyi (strain ATCC BAA-2266 / KCTC 15142 / 195) (Dehalococcoides ethenogenes (strain 195)).